Here is an 860-residue protein sequence, read N- to C-terminus: Ubiquitin carboxyl-terminal hydrolase 13 (860 aa).

The UBP-type; degenerate zinc finger occupies 168-276 (QVSRHARSLR…EHLLHFGIDM (109 aa)). Residues C192, C195, C212, and H225 each contribute to the Zn(2+) site. Positions 318 to 857 (TGIKNLGNSC…LGYMYFYRRL (540 aa)) constitute a USP domain. C327 acts as the Nucleophile in catalysis. Positions 611-636 (DLTPPIVIPEDTRDSSTNNSLESPEI) are disordered. 2 consecutive UBA domains span residues 635 to 676 (EIDE…IIAH) and 710 to 750 (QPPE…IFTH). The span at 755 to 768 (DESEAMSDTADTEP) shows a compositional bias: acidic residues. Positions 755 to 795 (DESEAMSDTADTEPNDNSFSNANAHTDSSLSPDQDLSSPRV) are disordered. A compositionally biased stretch (polar residues) spans 769-780 (NDNSFSNANAHT). Residues 781 to 793 (DSSLSPDQDLSSP) are compositionally biased toward low complexity. H819 (proton acceptor) is an active-site residue.

The protein belongs to the peptidase C19 family.

The catalysed reaction is Thiol-dependent hydrolysis of ester, thioester, amide, peptide and isopeptide bonds formed by the C-terminal Gly of ubiquitin (a 76-residue protein attached to proteins as an intracellular targeting signal).. Its activity is regulated as follows. Specifically inhibited by spautin-1 (specific and potent autophagy inhibitor-1), a derivative of MBCQ that binds to usp13 and inhibits deubiquitinase activity. Functionally, deubiquitinase that mediates deubiquitination of target proteins and is involved in various processes such as autophagy and endoplasmic reticulum-associated degradation (ERAD). This Danio rerio (Zebrafish) protein is Ubiquitin carboxyl-terminal hydrolase 13 (usp13).